The following is a 285-amino-acid chain: Ribosomal RNA small subunit methyltransferase A (285 aa).

S-adenosyl-L-methionine-binding residues include asparagine 11, leucine 13, glycine 37, glutamate 57, aspartate 85, and asparagine 105.

This sequence belongs to the class I-like SAM-binding methyltransferase superfamily. rRNA adenine N(6)-methyltransferase family. RsmA subfamily.

The protein resides in the cytoplasm. It catalyses the reaction adenosine(1518)/adenosine(1519) in 16S rRNA + 4 S-adenosyl-L-methionine = N(6)-dimethyladenosine(1518)/N(6)-dimethyladenosine(1519) in 16S rRNA + 4 S-adenosyl-L-homocysteine + 4 H(+). Its function is as follows. Specifically dimethylates two adjacent adenosines (A1518 and A1519) in the loop of a conserved hairpin near the 3'-end of 16S rRNA in the 30S particle. May play a critical role in biogenesis of 30S subunits. The polypeptide is Ribosomal RNA small subunit methyltransferase A (Campylobacter curvus (strain 525.92)).